The sequence spans 405 residues: Tryptophan synthase beta chain (405 aa).

At Lys86 the chain carries N6-(pyridoxal phosphate)lysine.

This sequence belongs to the TrpB family. In terms of assembly, tetramer of two alpha and two beta chains. Pyridoxal 5'-phosphate is required as a cofactor.

It carries out the reaction (1S,2R)-1-C-(indol-3-yl)glycerol 3-phosphate + L-serine = D-glyceraldehyde 3-phosphate + L-tryptophan + H2O. It participates in amino-acid biosynthesis; L-tryptophan biosynthesis; L-tryptophan from chorismate: step 5/5. Its function is as follows. The beta subunit is responsible for the synthesis of L-tryptophan from indole and L-serine. The polypeptide is Tryptophan synthase beta chain (Shewanella piezotolerans (strain WP3 / JCM 13877)).